The chain runs to 94 residues: Aspartyl/glutamyl-tRNA(Asn/Gln) amidotransferase subunit C (94 aa).

The protein belongs to the GatC family. Heterotrimer of A, B and C subunits.

The catalysed reaction is L-glutamyl-tRNA(Gln) + L-glutamine + ATP + H2O = L-glutaminyl-tRNA(Gln) + L-glutamate + ADP + phosphate + H(+). It carries out the reaction L-aspartyl-tRNA(Asn) + L-glutamine + ATP + H2O = L-asparaginyl-tRNA(Asn) + L-glutamate + ADP + phosphate + 2 H(+). Functionally, allows the formation of correctly charged Asn-tRNA(Asn) or Gln-tRNA(Gln) through the transamidation of misacylated Asp-tRNA(Asn) or Glu-tRNA(Gln) in organisms which lack either or both of asparaginyl-tRNA or glutaminyl-tRNA synthetases. The reaction takes place in the presence of glutamine and ATP through an activated phospho-Asp-tRNA(Asn) or phospho-Glu-tRNA(Gln). The polypeptide is Aspartyl/glutamyl-tRNA(Asn/Gln) amidotransferase subunit C (Carboxydothermus hydrogenoformans (strain ATCC BAA-161 / DSM 6008 / Z-2901)).